The chain runs to 221 residues: MKPAPTTQQELLTRAQQIAGLSFAELADEAGMTVPPDLRKDKGWVGQLLEWHLGATAGSRPQQDFEHLGIELKSIPISYTGKPLETTFVCVAPLTGVHGLTWEQSHVRNKLSKVLWIPVQGEREIPLAERCVGYPLLWSPSPEEEAQLKADWEELMELIVLGKVAQITAKHGEVLQLRPKAANGRALTEAYGANGRPIKTLPRGFYLRTQFTAQILQRYYA.

This sequence belongs to the MutH family.

It is found in the cytoplasm. Functionally, sequence-specific endonuclease that cleaves unmethylated GATC sequences. It is involved in DNA mismatch repair. The chain is DNA mismatch repair protein MutH from Vibrio cholerae serotype O1 (strain ATCC 39541 / Classical Ogawa 395 / O395).